We begin with the raw amino-acid sequence, 289 residues long: ATP synthase gamma chain (289 aa).

The protein belongs to the ATPase gamma chain family. F-type ATPases have 2 components, CF(1) - the catalytic core - and CF(0) - the membrane proton channel. CF(1) has five subunits: alpha(3), beta(3), gamma(1), delta(1), epsilon(1). CF(0) has three main subunits: a, b and c.

Its subcellular location is the cell inner membrane. In terms of biological role, produces ATP from ADP in the presence of a proton gradient across the membrane. The gamma chain is believed to be important in regulating ATPase activity and the flow of protons through the CF(0) complex. The protein is ATP synthase gamma chain of Azoarcus sp. (strain BH72).